The following is a 546-amino-acid chain: CTP synthase (546 aa).

An amidoligase domain region spans residues 1–265; that stretch reads MTKYVFVTGG…DEIVCHKLNI (265 aa). Residue Ser13 coordinates CTP. Position 13 (Ser13) interacts with UTP. Residues 14-19 and Asp71 each bind ATP; that span reads SLGKGI. Mg(2+) is bound by residues Asp71 and Glu139. Residues 146–148, 186–191, and Lys222 each bind CTP; these read DIE and KTKPTQ. Residues 186 to 191 and Lys222 contribute to the UTP site; that span reads KTKPTQ. In terms of domain architecture, Glutamine amidotransferase type-1 spans 290 to 543; that stretch reads NIAFVGKYVD…VRAALAHQQK (254 aa). Position 351 (Gly351) interacts with L-glutamine. Cys378 (nucleophile; for glutamine hydrolysis) is an active-site residue. Residues 379-382, Glu402, and Arg469 each bind L-glutamine; that span reads LGMQ. Catalysis depends on residues His516 and Glu518.

This sequence belongs to the CTP synthase family. In terms of assembly, homotetramer.

The catalysed reaction is UTP + L-glutamine + ATP + H2O = CTP + L-glutamate + ADP + phosphate + 2 H(+). The enzyme catalyses L-glutamine + H2O = L-glutamate + NH4(+). It catalyses the reaction UTP + NH4(+) + ATP = CTP + ADP + phosphate + 2 H(+). Its pathway is pyrimidine metabolism; CTP biosynthesis via de novo pathway; CTP from UDP: step 2/2. Its activity is regulated as follows. Allosterically activated by GTP, when glutamine is the substrate; GTP has no effect on the reaction when ammonia is the substrate. The allosteric effector GTP functions by stabilizing the protein conformation that binds the tetrahedral intermediate(s) formed during glutamine hydrolysis. Inhibited by the product CTP, via allosteric rather than competitive inhibition. In terms of biological role, catalyzes the ATP-dependent amination of UTP to CTP with either L-glutamine or ammonia as the source of nitrogen. Regulates intracellular CTP levels through interactions with the four ribonucleotide triphosphates. The chain is CTP synthase from Thiobacillus denitrificans (strain ATCC 25259 / T1).